Here is a 113-residue protein sequence, read N- to C-terminus: DNA-directed RNA polymerase subunit omega (113 aa).

The protein belongs to the RNA polymerase subunit omega family. In terms of assembly, the RNAP catalytic core consists of 2 alpha, 1 beta, 1 beta' and 1 omega subunit. When a sigma factor is associated with the core the holoenzyme is formed, which can initiate transcription.

The catalysed reaction is RNA(n) + a ribonucleoside 5'-triphosphate = RNA(n+1) + diphosphate. Its function is as follows. Promotes RNA polymerase assembly. Latches the N- and C-terminal regions of the beta' subunit thereby facilitating its interaction with the beta and alpha subunits. The sequence is that of DNA-directed RNA polymerase subunit omega from Rhizorhabdus wittichii (strain DSM 6014 / CCUG 31198 / JCM 15750 / NBRC 105917 / EY 4224 / RW1) (Sphingomonas wittichii).